The primary structure comprises 461 residues: Protein transport protein HofB homolog (461 aa).

Glycine 222–threonine 229 lines the ATP pocket.

This sequence belongs to the GSP E family.

The polypeptide is Protein transport protein HofB homolog (hofB) (Escherichia coli (strain K12)).